Consider the following 430-residue polypeptide: Histidinol dehydrogenase (430 aa).

Tyr-131, Gln-192, and Asn-215 together coordinate NAD(+). Substrate is bound by residues Ser-238, Gln-260, and His-263. Positions 260 and 263 each coordinate Zn(2+). Catalysis depends on proton acceptor residues Glu-328 and His-329. Residues His-329, Asp-362, Glu-416, and His-421 each contribute to the substrate site. Asp-362 is a Zn(2+) binding site. Zn(2+) is bound at residue His-421.

It belongs to the histidinol dehydrogenase family. The cofactor is Zn(2+).

It catalyses the reaction L-histidinol + 2 NAD(+) + H2O = L-histidine + 2 NADH + 3 H(+). It functions in the pathway amino-acid biosynthesis; L-histidine biosynthesis; L-histidine from 5-phospho-alpha-D-ribose 1-diphosphate: step 9/9. Catalyzes the sequential NAD-dependent oxidations of L-histidinol to L-histidinaldehyde and then to L-histidine. This is Histidinol dehydrogenase from Acinetobacter baylyi (strain ATCC 33305 / BD413 / ADP1).